An 830-amino-acid polypeptide reads, in one-letter code: Venom phosphodiesterase (830 aa).

SMB domains follow at residues 7–50 (PLES…VLPT) and 51–95 (QSWS…RETS). Intrachain disulfides connect Cys-11–Cys-15, Cys-11–Cys-28, Cys-15–Cys-46, Cys-26–Cys-28, Cys-26–Cys-39, Cys-32–Cys-38, Cys-39–Cys-46, Cys-55–Cys-60, Cys-55–Cys-72, Cys-60–Cys-90, Cys-70–Cys-72, Cys-70–Cys-83, Cys-76–Cys-82, Cys-83–Cys-90, Cys-101–Cys-147, and Cys-109–Cys-321. Asn-16 carries N-linked (GlcNAc...) asparagine glycosylation. Positions 35-37 (RKA) match the Cell attachment site motif. Asp-124 and Thr-162 together coordinate a divalent metal cation. Residue Thr-162 is the AMP-threonine intermediate of the active site. N-linked (GlcNAc...) asparagine glycans are attached at residues Asn-193, Asn-236, and Asn-247. Lys-248 lines the AMP pocket. 4 residues coordinate a divalent metal cation: Asp-282, His-286, Asp-329, and His-330. Position 286 (His-286) interacts with AMP. 6 cysteine pairs are disulfide-bonded: Cys-337–Cys-434, Cys-385–Cys-772, Cys-518–Cys-575, Cys-531–Cys-632, Cys-533–Cys-617, and Cys-740–Cys-750. A divalent metal cation is bound at residue His-439. Asn-489 carries an N-linked (GlcNAc...) asparagine glycan. Residues Asn-723 and Asn-742 are each glycosylated (N-linked (GlcNAc...) asparagine).

Belongs to the nucleotide pyrophosphatase/phosphodiesterase family. Monomer cleaved in two subunits; disulfide-linked. Is synthesized as a single-chain protein and is subsequently cleaved to form a two-subunit protein held together with disulfide bonds. A divalent metal cation is required as a cofactor. Expressed by venom gland.

It is found in the secreted. It carries out the reaction ADP + H2O = AMP + phosphate + H(+). Functionally, hydrolyzes ADP with high activity. Shows weak or no activity on 5'-AMP, 5'-GMP, 3'-AMP, ATP, cAMP, and cGMP. Is devoid of monophosphatase and proteinase activities. Dose-dependently inhibits platelet aggregation induced by ADP and collagen. The sequence is that of Venom phosphodiesterase from Naja atra (Chinese cobra).